We begin with the raw amino-acid sequence, 626 residues long: MSTNQETRGFQSEVKQLLQLMIHSLYSNKEIFLRELISNASDAADKLRFKALSAPELYEGDGDLKVRISFDAEKGTLTISDNGIGMTREQVIDHLGTIAKSGTKEFLAALGQEQAKDSQLIGQFGVGFYSAFIVADKVTVKTRAAGEPIDKAVLWESAGEGEYSVADIEKKERGTEITLHLREEEKEFANEWRVREIIGKYSDHIGLPVEILAKEYDEEGKETGIKWEKINKAQALWTRSKGEISDEEYKEFYKHLSHDFADPLLWTHNKVEGNQEYTSLLYVPSKAPWDLFNREHKHGLKLYVQRVFIMDDAEQFMPNYLRFMRGLIDSNDLPLNVSREILQDNKVTAALRKALTKRSLQMLEKLAKDDEEKYLQFWKEFGLVLKEGPSEDFANKENIAKLLRFASSKNDSSEQTVSLEDYVARMKEGQKAIYYITADSYIAAKNSPHLELFNKKDIEVLLLSDRIDEWMLSYLTEFDGKQLQPITKADLDLGDLADKEQEEQKEQDKTFSSFIERVKTLLGERVKDVRLTHRLTDTPAVVSTDNDQMTTQMAKLFAAAGQPVPEVKYTFELNPEHHLVKKVADLADEDEFANWIELLLEQAMLAERGSLENPTAFIKRVNSLLS.

An a; substrate-binding region spans residues 1–339 (MSTNQETRGF…SNDLPLNVSR (339 aa)). Positions 340–555 (EILQDNKVTA…NDQMTTQMAK (216 aa)) are b. The interval 556 to 626 (LFAAAGQPVP…FIKRVNSLLS (71 aa)) is c.

This sequence belongs to the heat shock protein 90 family. As to quaternary structure, homodimer.

The protein localises to the cytoplasm. In terms of biological role, molecular chaperone. Has ATPase activity. This is Chaperone protein HtpG from Histophilus somni (strain 129Pt) (Haemophilus somnus).